A 522-amino-acid chain; its full sequence is Zinc finger protein 329 (522 aa).

At serine 30 the chain carries Phosphoserine. 12 C2H2-type zinc fingers span residues 184–206 (YKCA…HRTH), 212–234 (YTCN…RRIH), 240–262 (YKCS…QRIH), 268–290 (YACL…QRTH), 296–318 (YRCN…LRIH), 324–346 (YECS…ERTH), 352–374 (FECV…QKIH), 380–402 (YECK…QRVH), 408–430 (YGCN…QRIH), 436–458 (YECN…QRIH), 464–486 (YQCL…QRLH), and 492–514 (SQCP…QRTH).

The protein belongs to the krueppel C2H2-type zinc-finger protein family.

It is found in the nucleus. Its function is as follows. May be involved in transcriptional regulation. This chain is Zinc finger protein 329 (Znf329), found in Mus musculus (Mouse).